The following is a 320-amino-acid chain: uncharacterized protein (320 aa).

This sequence belongs to the anthranilate phosphoribosyltransferase family.

This is an uncharacterized protein from Escherichia coli (strain K12).